A 264-amino-acid polypeptide reads, in one-letter code: Ribosome-recycling factor, mitochondrial (264 aa).

Belongs to the RRF family.

It is found in the mitochondrion. Its function is as follows. Necessary for protein synthesis in mitochondria. Functions as a ribosome recycling factor in mitochondria. In Yarrowia lipolytica (strain CLIB 122 / E 150) (Yeast), this protein is Ribosome-recycling factor, mitochondrial (RRF1).